A 147-amino-acid chain; its full sequence is Transcriptional regulator MraZ (147 aa).

2 consecutive SpoVT-AbrB domains span residues 5 to 52 and 81 to 124; these read SHAI…PETE and ATTL…SEEA.

The protein belongs to the MraZ family. In terms of assembly, forms oligomers.

The protein resides in the cytoplasm. The protein localises to the nucleoid. In Saccharophagus degradans (strain 2-40 / ATCC 43961 / DSM 17024), this protein is Transcriptional regulator MraZ.